A 570-amino-acid chain; its full sequence is Periplasmic trehalase (570 aa).

Residues 1–34 form the signal peptide; that stretch reads MIPPEIRRSVLLQKAIKLALAGTLLTFASFSATA. Substrate is bound by residues R159, 166-167, N203, 212-214, 284-286, and G317; these read WD, RSQ, and RPE. Residues D319 and E503 each act as proton donor/acceptor in the active site. E518 lines the substrate pocket. Residues 544–570 form a disordered region; the sequence is KPCDSVPSTRPASLSATPTKTPSAATQ. A compositionally biased stretch (low complexity) spans 554 to 570; the sequence is PASLSATPTKTPSAATQ.

Belongs to the glycosyl hydrolase 37 family. As to quaternary structure, monomer.

Its subcellular location is the periplasm. The catalysed reaction is alpha,alpha-trehalose + H2O = alpha-D-glucose + beta-D-glucose. Its function is as follows. Provides the cells with the ability to utilize trehalose at high osmolarity by splitting it into glucose molecules that can subsequently be taken up by the phosphotransferase-mediated uptake system. The protein is Periplasmic trehalase of Salmonella typhimurium (strain LT2 / SGSC1412 / ATCC 700720).